The chain runs to 56 residues: Large ribosomal subunit protein eL37 (56 aa).

Zn(2+)-binding residues include Cys19, Cys22, Cys34, and Cys37. The segment at 19 to 37 adopts a C4-type zinc-finger fold; the sequence is CRRCGRLSYNFNRKTCVAC.

Belongs to the eukaryotic ribosomal protein eL37 family. It depends on Zn(2+) as a cofactor.

Binds to the 23S rRNA. The sequence is that of Large ribosomal subunit protein eL37 from Methanothrix thermoacetophila (strain DSM 6194 / JCM 14653 / NBRC 101360 / PT) (Methanosaeta thermophila).